The primary structure comprises 283 residues: (+)-borneol dehydrogenase 2 (283 aa).

Residues 27–33, aspartate 51, 76–77, and 103–105 contribute to the NAD(+) site; these read GGSSGIG, DV, and NAG. Residue serine 157 is the Proton donor of the active site. Residues tyrosine 170, lysine 174, and threonine 205 each coordinate NAD(+). Catalysis depends on tyrosine 170, which acts as the Proton acceptor. Lysine 174 acts as the Proton donor/acceptor in catalysis.

The protein belongs to the short-chain dehydrogenases/reductases (SDR) family.

It carries out the reaction (1R,2S,4R)-borneol + NAD(+) = (1R,4R)-camphor + NADH + H(+). Involved in the biosynthesis of monoterpene natural products related to camphor. Catalayzes the oxidation of (+)-borneol to (+)-camphor. Shows absolute selectivity towards (+)-borneol. Catalyzes the oxidation of (+)-isoborneol to (-)-camphor. Shows absolute selectivity towards (+)-isoborneol. In Salvia officinalis (Sage), this protein is (+)-borneol dehydrogenase 2.